Here is a 265-residue protein sequence, read N- to C-terminus: UPF0294 protein KPK_4510 (265 aa).

It belongs to the UPF0294 family.

Its subcellular location is the cytoplasm. The chain is UPF0294 protein KPK_4510 from Klebsiella pneumoniae (strain 342).